We begin with the raw amino-acid sequence, 607 residues long: WD repeat-containing protein 1-B (607 aa).

WD repeat units lie at residues 4-45, 48-87, 93-135, 138-176, 180-218, 224-263, 270-306, 311-351, 358-408, 432-474, 480-518, 523-561, and 566-604; these read EIKK…IRNI, PAIADIYTEHAHQVVVARYAPSGFYIASGDTSGKLRIWDT, LLKY…LWDT, SVGEIIGNIKVINSVDIKQTRPYRLVTGSDDNCCAFFEG, KFKFTMSDHSRFVNCVRFSPDGSRLASAGADGQIFLYDG, VCSLGGSKAHDGGIYAVSWSPDGTQLLSASGDKTAKIWDV, TTFNLGSDVLDQQLGCLWQKDYLLSVSLSGYINYLDK, KPFR…YWDA, TFTG…KMDV, LKDK…LYSI, KDEGKTLPAKGAVTDLAYSPDGAFLAVTDANKVVTVFSV, SEHNSYYGHHAKALSVAWSPDNEHFASSGMDMMVYVWTL, and TRIKMPDAHRLHHVSSLAWLDENTLATVSHDACVKQWTV.

It belongs to the WD repeat AIP1 family.

It is found in the cell membrane. The protein localises to the cytoplasm. The protein resides in the cytoskeleton. Its subcellular location is the nucleus. Induces disassembly of actin filaments in conjunction with ADF/cofilin family proteins. Doesn't sever actin filaments alone, but caps the barbed ends of filaments severed by cofilin, which blocks annealing and depolymerization and allows more extensive severing by cofilin. In Xenopus laevis (African clawed frog), this protein is WD repeat-containing protein 1-B (wdr1-b).